Consider the following 477-residue polypeptide: Glutamyl-tRNA(Gln) amidotransferase subunit A (477 aa).

Residues Lys-76 and Ser-151 each act as charge relay system in the active site. The active-site Acyl-ester intermediate is Ser-175.

It belongs to the amidase family. GatA subfamily. As to quaternary structure, heterotrimer of A, B and C subunits.

The enzyme catalyses L-glutamyl-tRNA(Gln) + L-glutamine + ATP + H2O = L-glutaminyl-tRNA(Gln) + L-glutamate + ADP + phosphate + H(+). Its function is as follows. Allows the formation of correctly charged Gln-tRNA(Gln) through the transamidation of misacylated Glu-tRNA(Gln) in organisms which lack glutaminyl-tRNA synthetase. The reaction takes place in the presence of glutamine and ATP through an activated gamma-phospho-Glu-tRNA(Gln). The chain is Glutamyl-tRNA(Gln) amidotransferase subunit A from Prosthecochloris aestuarii (strain DSM 271 / SK 413).